Here is a 167-residue protein sequence, read N- to C-terminus: uncharacterized protein (167 aa).

The span at methionine 1–arginine 10 shows a compositional bias: basic residues. A disordered region spans residues methionine 1–glutamate 23.

This is an uncharacterized protein from Sinorhizobium fredii (strain NBRC 101917 / NGR234).